A 352-amino-acid polypeptide reads, in one-letter code: tRNA (guanine-N(1)-)-methyltransferase (352 aa).

S-adenosyl-L-methionine-binding positions include Gly-109 and 129-134; that span reads IGDYVL.

It belongs to the RNA methyltransferase TrmD family. As to quaternary structure, homodimer.

The protein resides in the cytoplasm. The enzyme catalyses guanosine(37) in tRNA + S-adenosyl-L-methionine = N(1)-methylguanosine(37) in tRNA + S-adenosyl-L-homocysteine + H(+). Functionally, specifically methylates guanosine-37 in various tRNAs. In Chlamydia trachomatis serovar A (strain ATCC VR-571B / DSM 19440 / HAR-13), this protein is tRNA (guanine-N(1)-)-methyltransferase.